Consider the following 164-residue polypeptide: Ribosome maturation factor RimP (164 aa).

Belongs to the RimP family.

It localises to the cytoplasm. Its function is as follows. Required for maturation of 30S ribosomal subunits. This Thermodesulfovibrio yellowstonii (strain ATCC 51303 / DSM 11347 / YP87) protein is Ribosome maturation factor RimP.